Consider the following 291-residue polypeptide: uncharacterized protein (291 aa).

Positions 68–205 constitute a DAGKc domain; that stretch reads PVAVSASFLW…VIQLWARPRG (138 aa).

This is an uncharacterized protein from Mycobacterium tuberculosis (strain CDC 1551 / Oshkosh).